A 4912-amino-acid chain; its full sequence is Probable E3 ubiquitin-protein ligase HERC2 (4912 aa).

A disordered region spans residues 1–67 (MFNRQASGGA…GSGSAAPPSH (67 aa)). Residues 8-17 (GGAGSSGQGA) show a composition bias toward gly residues. Positions 18 to 31 (GSSQTASAAPVSAG) are enriched in low complexity. Gly residues-rich tracts occupy residues 32–41 (VGVGGGGGAS) and 49–59 (SAAGSGSGSGS). RCC1 repeat units lie at residues 634–685 (NHNA…AITC), 686–739 (GGNL…ALTS), 741–789 (GLVF…ALSS), 791–843 (GQLY…ALSS), and 844–897 (SGEV…VWTQ). Disordered stretches follow at residues 1102-1129 (RLSP…STSP), 1428-1475 (QLLQ…PGRG), and 1659-1681 (QEQE…EEET). Positions 1446–1458 (SHSCHSTAGNTPT) are enriched in polar residues. Thr-1776 is modified (phosphothreonine). Residues 1917-1990 (SGPDLAKLMK…QYDLQLADSA (74 aa)) form the MIB/HERC2 domain. Disordered stretches follow at residues 1994-2018 (ASPT…SHPS) and 2381-2412 (GSIY…SGSG). Residues 2396-2412 (ESQQPGEQDQQLSSGSG) are compositionally biased toward polar residues. The UBA domain occupies 2511 to 2557 (ATDAQLIGQIMEMGFTRRTVELALKQLSLQAEIMPTPEQIVQWILEH). Residues 2572-2620 (LASSASSHDPEADSDNECPSSNSTTSSSTSSDTVEGQPMAVSGPAPPVK) are disordered. Residues 2591-2604 (SSNSTTSSSTSSDT) are compositionally biased toward low complexity. The region spanning 2624 to 2699 (RKDFQTADLY…VCFVHIELVE (76 aa)) is the CPH domain. The DOC domain maps to 2780–2958 (TSATLPSLGD…FLASEYSAGV (179 aa)). 7 RCC1 repeats span residues 2985 to 3036 (PCTV…IVSQ), 3037 to 3090 (DGKV…ALTL), 3091 to 3142 (DGKV…AISS), 3144 to 3194 (GELY…TLAL), 3197 to 3248 (DGAV…ALTR), 3250 to 3300 (GEVW…AVTD), and 3302 to 3352 (GQVY…AWGL). Disordered stretches follow at residues 3352-3374 (LPNA…RDPL) and 3953-4000 (LPSS…EQPD). The segment covering 3974–3988 (LNSTTSLSSSTVSNV) has biased composition (low complexity). RCC1 repeat units lie at residues 4049–4099 (STIY…AVTP), 4101–4153 (GKLF…ALTT), 4155–4205 (GEVY…AITA), 4207–4259 (GHVL…CITD), 4261–4311 (DNVW…ALTK), 4313–4363 (GAVY…ACSD), and 4365–4415 (GEVY…ALST). Residues 4547–4882 (ALALPHRVWK…IHFCKSIDTD (336 aa)) enclose the HECT domain. Cys-4850 serves as the catalytic Glycyl thioester intermediate. The disordered stretch occupies residues 4891–4912 (EPTEATGSEDNSDLESVASHEG).

The protein resides in the cytoplasm. It is found in the cytoskeleton. The protein localises to the microtubule organizing center. Its subcellular location is the centrosome. It localises to the centriole. It carries out the reaction S-ubiquitinyl-[E2 ubiquitin-conjugating enzyme]-L-cysteine + [acceptor protein]-L-lysine = [E2 ubiquitin-conjugating enzyme]-L-cysteine + N(6)-ubiquitinyl-[acceptor protein]-L-lysine.. It functions in the pathway protein modification; protein ubiquitination. Functionally, probable E3 ubiquitin-protein ligase which accepts ubiquitin from an E2 ubiquitin-conjugating enzyme in the form of a thioester and then directly transfers the ubiquitin to targeted substrates. This chain is Probable E3 ubiquitin-protein ligase HERC2 (HERC2), found in Drosophila melanogaster (Fruit fly).